The following is a 227-amino-acid chain: uncharacterized protein (227 aa).

An AMMECR1 domain is found at 5 to 220 (TSSPYAFYAF…IAWDEFETGL (216 aa)).

This is an uncharacterized protein from Kluyveromyces lactis (strain ATCC 8585 / CBS 2359 / DSM 70799 / NBRC 1267 / NRRL Y-1140 / WM37) (Yeast).